Here is a 327-residue protein sequence, read N- to C-terminus: Polyadenylate-binding protein-interacting protein 9 (327 aa).

Residues 59-69 (KLNPLAKEFFP) carry the PAM2-like motif. Positions 97–113 (KQSGEEFDLDAKKDDNT) are enriched in basic and acidic residues. The segment at 97–132 (KQSGEEFDLDAKKDDNTRKRRNYSQGRRRLTGRISK) is disordered. The Bipartite nuclear localization signal motif lies at 114–125 (RKRRNYSQGRRR). The segment covering 114-127 (RKRRNYSQGRRRLT) has biased composition (basic residues). RRM domains are found at residues 141 to 216 (RTVY…PSKT) and 238 to 314 (RTIY…PSKT). A disordered region spans residues 308–327 (RVSPSKTPVRPRITRPPSTN).

Its subcellular location is the nucleus. This is Polyadenylate-binding protein-interacting protein 9 (CID9) from Arabidopsis thaliana (Mouse-ear cress).